The primary structure comprises 226 residues: Imidazoleglycerol-phosphate dehydratase (226 aa).

The segment at 23–55 is disordered; the sequence is LTGGPIERPQPSLFASEKGANTAGPDDASQTTA.

This sequence belongs to the imidazoleglycerol-phosphate dehydratase family.

It catalyses the reaction D-erythro-1-(imidazol-4-yl)glycerol 3-phosphate = 3-(imidazol-4-yl)-2-oxopropyl phosphate + H2O. It functions in the pathway amino-acid biosynthesis; L-histidine biosynthesis; L-histidine from 5-phospho-alpha-D-ribose 1-diphosphate: step 6/9. This is Imidazoleglycerol-phosphate dehydratase (HIS3) from Maudiozyma humilis (Sour dough yeast).